Reading from the N-terminus, the 126-residue chain is Probable glycine cleavage system H protein (126 aa).

One can recognise a Lipoyl-binding domain in the interval 24 to 106 (VVRVGITDFA…FGDGWLLEVE (83 aa)). Lys65 bears the N6-lipoyllysine mark.

This sequence belongs to the GcvH family. In terms of assembly, the glycine cleavage system is composed of four proteins: P, T, L and H. (R)-lipoate serves as cofactor.

Functionally, the glycine cleavage system catalyzes the degradation of glycine. The H protein shuttles the methylamine group of glycine from the P protein to the T protein. The chain is Probable glycine cleavage system H protein from Natronomonas pharaonis (strain ATCC 35678 / DSM 2160 / CIP 103997 / JCM 8858 / NBRC 14720 / NCIMB 2260 / Gabara) (Halobacterium pharaonis).